Consider the following 236-residue polypeptide: 2,3,4,5-tetrahydropyridine-2,6-dicarboxylate N-acetyltransferase (236 aa).

It belongs to the transferase hexapeptide repeat family. DapH subfamily.

It catalyses the reaction (S)-2,3,4,5-tetrahydrodipicolinate + acetyl-CoA + H2O = L-2-acetamido-6-oxoheptanedioate + CoA. It participates in amino-acid biosynthesis; L-lysine biosynthesis via DAP pathway; LL-2,6-diaminopimelate from (S)-tetrahydrodipicolinate (acetylase route): step 1/3. Catalyzes the transfer of an acetyl group from acetyl-CoA to tetrahydrodipicolinate. The polypeptide is 2,3,4,5-tetrahydropyridine-2,6-dicarboxylate N-acetyltransferase (Clostridium perfringens (strain ATCC 13124 / DSM 756 / JCM 1290 / NCIMB 6125 / NCTC 8237 / Type A)).